A 235-amino-acid polypeptide reads, in one-letter code: MDARERLIVGLDVPTIGEAEKLVSTLGDDILFYKIGYQLVFAGGLEFARDLAASGKKIFLDMKLLDIDNTVASGVENIARMGMSMLTLHAYPKAMRAAVEAAAGSGLCLLGVTVLTSMDAEDLAEAGYNQDPHSLVLRRAEQARAAGMGGIVCSAAEAAEVREVLGPDMAIVTPGIRPTGSDHGDQKRVMTPFDALKAGATHLVVARPIVKAPDPRHAARAVLNEMVAARWPANR.

Substrate-binding positions include Asp12, Lys34, 61 to 70, Thr116, Arg177, Gln186, and Arg207; that span reads DMKLLDIDNT. The active-site Proton donor is the Lys63.

It belongs to the OMP decarboxylase family. Type 1 subfamily. In terms of assembly, homodimer.

The enzyme catalyses orotidine 5'-phosphate + H(+) = UMP + CO2. It functions in the pathway pyrimidine metabolism; UMP biosynthesis via de novo pathway; UMP from orotate: step 2/2. Catalyzes the decarboxylation of orotidine 5'-monophosphate (OMP) to uridine 5'-monophosphate (UMP). The chain is Orotidine 5'-phosphate decarboxylase from Rhizobium etli (strain CIAT 652).